The primary structure comprises 159 residues: 2-C-methyl-D-erythritol 2,4-cyclodiphosphate synthase (159 aa).

Residues Asp-8 and His-10 each coordinate a divalent metal cation. 4-CDP-2-C-methyl-D-erythritol 2-phosphate is bound by residues 8–10 (DVH) and 34–35 (HS). His-42 is a binding site for a divalent metal cation. Residues 56–58 (DIG), 61–65 (FPDTD), 100–106 (AQAPKMA), 132–135 (TTTE), Phe-139, and Arg-142 each bind 4-CDP-2-C-methyl-D-erythritol 2-phosphate.

The protein belongs to the IspF family. As to quaternary structure, homotrimer. It depends on a divalent metal cation as a cofactor.

It catalyses the reaction 4-CDP-2-C-methyl-D-erythritol 2-phosphate = 2-C-methyl-D-erythritol 2,4-cyclic diphosphate + CMP. It functions in the pathway isoprenoid biosynthesis; isopentenyl diphosphate biosynthesis via DXP pathway; isopentenyl diphosphate from 1-deoxy-D-xylulose 5-phosphate: step 4/6. Involved in the biosynthesis of isopentenyl diphosphate (IPP) and dimethylallyl diphosphate (DMAPP), two major building blocks of isoprenoid compounds. Catalyzes the conversion of 4-diphosphocytidyl-2-C-methyl-D-erythritol 2-phosphate (CDP-ME2P) to 2-C-methyl-D-erythritol 2,4-cyclodiphosphate (ME-CPP) with a corresponding release of cytidine 5-monophosphate (CMP). The chain is 2-C-methyl-D-erythritol 2,4-cyclodiphosphate synthase from Cronobacter sakazakii (strain ATCC BAA-894) (Enterobacter sakazakii).